The chain runs to 169 residues: Putative phosphoesterase SE_0715 (169 aa).

The active-site Proton donor is the histidine 34. 2 short sequence motifs (HXTX) span residues 34–37 (HITI) and 115–118 (HFTI). The active-site Proton acceptor is the histidine 115.

This sequence belongs to the 2H phosphoesterase superfamily. YjcG family.

This is Putative phosphoesterase SE_0715 from Staphylococcus epidermidis (strain ATCC 12228 / FDA PCI 1200).